The sequence spans 455 residues: Probable glycine dehydrogenase (decarboxylating) subunit 1 (455 aa).

This sequence belongs to the GcvP family. N-terminal subunit subfamily. As to quaternary structure, the glycine cleavage system is composed of four proteins: P, T, L and H. In this organism, the P 'protein' is a heterodimer of two subunits.

The enzyme catalyses N(6)-[(R)-lipoyl]-L-lysyl-[glycine-cleavage complex H protein] + glycine + H(+) = N(6)-[(R)-S(8)-aminomethyldihydrolipoyl]-L-lysyl-[glycine-cleavage complex H protein] + CO2. The glycine cleavage system catalyzes the degradation of glycine. The P protein binds the alpha-amino group of glycine through its pyridoxal phosphate cofactor; CO(2) is released and the remaining methylamine moiety is then transferred to the lipoamide cofactor of the H protein. This Saccharolobus solfataricus (strain ATCC 35092 / DSM 1617 / JCM 11322 / P2) (Sulfolobus solfataricus) protein is Probable glycine dehydrogenase (decarboxylating) subunit 1.